The sequence spans 837 residues: V-type proton ATPase 116 kDa subunit a 1 (837 aa).

Topologically, residues 1-388 (MGELFRSEEM…DAYGIGSYRE (388 aa)) are cytoplasmic. Residues 389–407 (INPAPYTIITFPFLFAVMF) traverse the membrane as a helical segment. The Vacuolar segment spans residues 408–409 (GD). Residues 410 to 426 (FGHGILMTLFAVWMVVR) traverse the membrane as a helical segment. Residues 427–441 (ESRILSQKIDNELFT) lie on the Cytoplasmic side of the membrane. A helical transmembrane segment spans residues 442-471 (MMFSGRYIILLMGLFSIYTGLIYNDCFSKA). The Vacuolar portion of the chain corresponds to 472-534 (LNLFGSSWSV…ATNKLTFLNS (63 aa)). A helical transmembrane segment spans residues 535 to 554 (FKMKMSVVLGIIHMTFGVAL). Over 555–572 (SLLNHIYFKKPLNIYLGF) the chain is Cytoplasmic. The chain crosses the membrane as a helical span at residues 573-593 (IPEMIFMTTLFGYLVILIIYK). Topologically, residues 594-638 (WCAYDASTSMVAPSLLIHFINMFLFSYQDTSLPMLYKGQMGLQCF) are vacuolar. A helical membrane pass occupies residues 639-658 (LVVCAIICVPWMLVVKPLIL). At 659-724 (RRQYLRRKHL…DTVVHQAIHT (66 aa)) the chain is on the cytoplasmic side. Residues 725 to 749 (IEYCLGCISNTASYLRLWALSLAHA) traverse the membrane as a helical segment. Residues 750 to 770 (QLSEVLWTMVMHVGLSIRSLG) are Vacuolar-facing. The chain crosses the membrane as a helical span at residues 771-809 (GGIALVFVFSAFATLTIAILLIMEGLSAFLHALRLHWVE). Topologically, residues 810–837 (FQNKFYMGTGFKFLPFSFENIREGKFDE) are cytoplasmic.

The protein belongs to the V-ATPase 116 kDa subunit family. V-ATPase is a heteromultimeric enzyme made up of two complexes: the ATP-hydrolytic V1 complex and the proton translocation V0 complex. The V1 complex consists of three catalytic AB heterodimers that form a heterohexamer, three peripheral stalks each consisting of EG heterodimers, one central rotor including subunits D and F, and the regulatory subunits C and H. The proton translocation complex V0 consists of the proton transport subunit a, a ring of proteolipid subunits c9c'', rotary subunit d, subunits e and f, and two accessory subunits.

It localises to the cytoplasmic vesicle. The protein resides in the clathrin-coated vesicle membrane. It is found in the secretory vesicle. Its subcellular location is the synaptic vesicle membrane. The protein localises to the melanosome. Its function is as follows. Subunit of the V0 complex of vacuolar(H+)-ATPase (V-ATPase), a multisubunit enzyme composed of a peripheral complex (V1) that hydrolyzes ATP and a membrane integral complex (V0) that translocates protons. V-ATPase is responsible for acidifying and maintaining the pH of intracellular compartments and in some cell types, is targeted to the plasma membrane, where it is responsible for acidifying the extracellular environment. Required for assembly and activity of the vacuolar ATPase. This chain is V-type proton ATPase 116 kDa subunit a 1 (atp6v0a1), found in Xenopus tropicalis (Western clawed frog).